The following is a 307-amino-acid chain: RHOMBOID-like protein 6, mitochondrial (307 aa).

The transit peptide at 1-62 (MRSRDMERGR…DCVAKLLRRF (62 aa)) directs the protein to the mitochondrion. 6 consecutive transmembrane segments (helical) span residues 105–125 (WLHA…IFGI), 136–156 (IGLI…LFLQ), 159–179 (ISVG…SELL), 191–211 (ALLS…LPWV), 214–234 (FAHI…LMQP), and 262–282 (LFFV…VMLF). The active-site Nucleophile is the Ser-164. Catalysis depends on His-216, which acts as the Charge relay system.

Belongs to the peptidase S54 family.

Its subcellular location is the mitochondrion membrane. It carries out the reaction Cleaves type-1 transmembrane domains using a catalytic dyad composed of serine and histidine that are contributed by different transmembrane domains.. In terms of biological role, probable rhomboid-type serine protease that catalyzes intramembrane proteolysis. Might be involved in response to abiotic stimuli. This chain is RHOMBOID-like protein 6, mitochondrial, found in Arabidopsis thaliana (Mouse-ear cress).